Reading from the N-terminus, the 340-residue chain is Outer membrane protein B (340 aa).

The first 26 residues, 1–26 (MSSKLVNSLRLTFLSFLGIVSTSLDA), serve as a signal peptide directing secretion.

This sequence belongs to the chlamydial OMP family.

Its subcellular location is the cell outer membrane. The chain is Outer membrane protein B (ompB) from Chlamydia muridarum (strain MoPn / Nigg).